We begin with the raw amino-acid sequence, 652 residues long: MNWVGGSRSRVLIKQERRKQKEYFEKHRLKSKMKSLGVLSPVKNSAVSLDILNLYMVNQISCKKKIPETVRKPTHVNMNRDIKMPLRKHNLELTMSPHCVPSKLCLDDTETNVNCQRLSSKEDLGPVQSQGMDSYSMLHPQFSKIENCSFTPSSFSVELPSNRHISKLNFTSGIAPTPQKLAYEKKQNDQRSTVNCSDSLLSKLNKSQDVFSPSHKTTRFGTLFERLNSLGNRNLLTKSPAVIMDEDCRSTDEIRQSDYITEKHSIQHIWGKNGKEVSNFLEDVNQSTPNLLSENCDSFVSQNMINVLNIDEQRIKKTFNKCDYDSMGDTCVVTSSDKNHVTDRCIRNIFTVPELTFSNSTLNKTSYPEKCQPNKKYQREYNKNERNDLSTSFENDYYPSSSERKEKFENDYQEKTPQKSIQKYPANSMGNIPSEELHSKQSWDFGLDEILMEEGGIYSLKSKRISTKKISLDSAQSSRSTSYSPRPTDSCFSSSSDLPSEDEDQISQQIEDSNRMTIKTKEKMNNFYVERMAKLSGDRIVKNDDKIHKQNENFYQFSVKNNTDQFPQLQCNSAHILQNKTNDNCVLQAARCDAGIQTESESVMEEKLDVAIQCDLISKCTCRSDVSLCNLERCSGNIKADTTGGQEIHKNN.

The binds DNA containing a D-loop DNA-binding region spans 1 to 231 (MNWVGGSRSR…TLFERLNSLG (231 aa)). Disordered regions lie at residues 363 to 434 (NKTS…NIPS) and 469 to 506 (KISLDSAQSSRSTSYSPRPTDSCFSSSSDLPSEDEDQI). Basic and acidic residues predominate over residues 377 to 388 (YQREYNKNERND). The span at 389 to 401 (LSTSFENDYYPSS) shows a compositional bias: polar residues. Residues 402 to 417 (SERKEKFENDYQEKTP) are compositionally biased toward basic and acidic residues. Over residues 473–498 (DSAQSSRSTSYSPRPTDSCFSSSSDL) the composition is skewed to low complexity.

Interacts with MSH5. Interacts with TEX11.

The protein resides in the chromosome. Involved in recombination, probably acting by stabilizing recombination intermediates during meiotic crossover formation. Required for normal germline development and fertility. Required for meiotic progression, complete chromosomal synapsis and crossover formation. Binds double-stranded DNA. However, also binds branched DNA molecules, such as those containing a D-loop or Holliday junction structure. Probably not required for formation of DNA double-strand breaks (DSBs). Also binds RNA in an RNA structure-independent manner, with a preference for binding 3'-UTR regions of mRNAs; may stabilize bound RNAs. This chain is Regulator of DNA class I crossover intermediates 1, found in Homo sapiens (Human).